An 83-amino-acid polypeptide reads, in one-letter code: Cytochrome b559 subunit alpha (83 aa).

Residues Val21 to Trp35 traverse the membrane as a helical segment. His23 lines the heme pocket.

The protein belongs to the PsbE/PsbF family. In terms of assembly, heterodimer of an alpha subunit and a beta subunit. PSII is composed of 1 copy each of membrane proteins PsbA, PsbB, PsbC, PsbD, PsbE, PsbF, PsbH, PsbI, PsbJ, PsbK, PsbL, PsbM, PsbT, PsbX, PsbY, PsbZ, Psb30/Ycf12, at least 3 peripheral proteins of the oxygen-evolving complex and a large number of cofactors. It forms dimeric complexes. It depends on heme b as a cofactor.

The protein localises to the plastid. It localises to the chloroplast thylakoid membrane. Its function is as follows. This b-type cytochrome is tightly associated with the reaction center of photosystem II (PSII). PSII is a light-driven water:plastoquinone oxidoreductase that uses light energy to abstract electrons from H(2)O, generating O(2) and a proton gradient subsequently used for ATP formation. It consists of a core antenna complex that captures photons, and an electron transfer chain that converts photonic excitation into a charge separation. The chain is Cytochrome b559 subunit alpha from Daucus carota (Wild carrot).